The following is a 474-amino-acid chain: tRNA-2-methylthio-N(6)-dimethylallyladenosine synthase (474 aa).

Residues 3 to 120 (KKLHIKTWGC…LPEMIEQIQR (118 aa)) enclose the MTTase N-terminal domain. [4Fe-4S] cluster-binding residues include Cys12, Cys49, Cys83, Cys157, Cys161, and Cys164. The 233-residue stretch at 143 to 375 (RADGPTAFVS…QDRITQQAMR (233 aa)) folds into the Radical SAM core domain. In terms of domain architecture, TRAM spans 378 to 441 (RQMLGTVQRI…TNSLRGEFVR (64 aa)).

This sequence belongs to the methylthiotransferase family. MiaB subfamily. In terms of assembly, monomer. Requires [4Fe-4S] cluster as cofactor.

Its subcellular location is the cytoplasm. It carries out the reaction N(6)-dimethylallyladenosine(37) in tRNA + (sulfur carrier)-SH + AH2 + 2 S-adenosyl-L-methionine = 2-methylsulfanyl-N(6)-dimethylallyladenosine(37) in tRNA + (sulfur carrier)-H + 5'-deoxyadenosine + L-methionine + A + S-adenosyl-L-homocysteine + 2 H(+). In terms of biological role, catalyzes the methylthiolation of N6-(dimethylallyl)adenosine (i(6)A), leading to the formation of 2-methylthio-N6-(dimethylallyl)adenosine (ms(2)i(6)A) at position 37 in tRNAs that read codons beginning with uridine. This chain is tRNA-2-methylthio-N(6)-dimethylallyladenosine synthase, found in Shewanella frigidimarina (strain NCIMB 400).